Reading from the N-terminus, the 133-residue chain is Small ribosomal subunit protein uS8 (133 aa).

This sequence belongs to the universal ribosomal protein uS8 family. Part of the 30S ribosomal subunit. Contacts proteins S5 and S12.

Functionally, one of the primary rRNA binding proteins, it binds directly to 16S rRNA central domain where it helps coordinate assembly of the platform of the 30S subunit. The polypeptide is Small ribosomal subunit protein uS8 (Chlamydia pneumoniae (Chlamydophila pneumoniae)).